Here is a 120-residue protein sequence, read N- to C-terminus: Large ribosomal subunit protein uL18 (120 aa).

The protein belongs to the universal ribosomal protein uL18 family. In terms of assembly, part of the 50S ribosomal subunit; part of the 5S rRNA/L5/L18/L25 subcomplex. Contacts the 5S and 23S rRNAs.

Functionally, this is one of the proteins that bind and probably mediate the attachment of the 5S RNA into the large ribosomal subunit, where it forms part of the central protuberance. The polypeptide is Large ribosomal subunit protein uL18 (Methylobacterium radiotolerans (strain ATCC 27329 / DSM 1819 / JCM 2831 / NBRC 15690 / NCIMB 10815 / 0-1)).